Here is a 785-residue protein sequence, read N- to C-terminus: Disintegrin and metalloproteinase domain-containing protein B (785 aa).

Residues 1-26 (MRFLKSALPFVASALSLLSVQAAARS) form the signal peptide. Residues 27 to 703 (QEPSAIQHVS…GSWVEQHKNL (677 aa)) lie on the Extracellular side of the membrane. The 229-residue stretch at 279-507 (KQVALVGIAA…NSVKSSCLSD (229 aa)) folds into the Peptidase M12B domain. N-linked (GlcNAc...) asparagine glycans are attached at residues Asn322, Asn329, and Asn355. Cystine bridges form between Cys398–Cys492 and Cys446–Cys464. His429 contributes to the Zn(2+) binding site. Glu430 is an active-site residue. His433 and His439 together coordinate Zn(2+). Residues 516–605 (GSQCGNGIVE…TCPADSFKKD (90 aa)) enclose the Disintegrin domain. N-linked (GlcNAc...) asparagine glycans are attached at residues Asn561, Asn593, and Asn640. Cys577 and Cys597 are joined by a disulfide. The chain crosses the membrane as a helical span at residues 704–724 (VIGVACGVGGLLVLSILWCMI). Topologically, residues 725 to 785 (NRCRRARTVV…GPYQSATRYA (61 aa)) are cytoplasmic. A disordered region spans residues 737–785 (PPMRPWPGPMPPPPPQMGQWAGPNRGYQGLRAEPPPPYPGPYQSATRYA). Residues 739–752 (MRPWPGPMPPPPPQ) are compositionally biased toward pro residues.

Zn(2+) serves as cofactor.

Its subcellular location is the membrane. Functionally, probable zinc protease. The sequence is that of Disintegrin and metalloproteinase domain-containing protein B (ADM-B) from Aspergillus fumigatus (strain ATCC MYA-4609 / CBS 101355 / FGSC A1100 / Af293) (Neosartorya fumigata).